The primary structure comprises 300 residues: MTTTNGRRPIIAFMSDLGITDDSVAQCKGLMLSVCPDVTIVDICHTMQPWDVEEGARYIVDLPRLFPEGTVFATTTYPATGTTARSVALRIAHASKGGARGQWAGSGAGFERKEGSYIYIAPNNGLLTTVIKEHGYLEAYEVSSPEVIPEQPEPTFYSREMVALPSAHLAAGFPLEKVGRRLADDEIVRFERKDPELVADHDLVGYVTNIDHPFGNVWTNIHRTDLEKLGVGYGTKLRITLDGVLPFELPLSPTFADAGEIGAAVAYLSSRGYLALARNAASLAYPYNLKAGISVQVKVG.

Residues Asp-16, 21-23 (DDS), Tyr-77, Ser-158, Asp-211, Asn-216, 270-271 (SR), and 278-280 (RNA) contribute to the S-adenosyl-L-methionine site.

Belongs to the SAM hydrolase / SAM-dependent halogenase family. As to quaternary structure, homohexamer.

The catalysed reaction is fluoride + S-adenosyl-L-methionine = 5'-deoxy-5'-fluoroadenosine + L-methionine. It catalyses the reaction chloride + S-adenosyl-L-methionine = 5'-chloro-5'-deoxyadenosine + L-methionine. Activity is severely inhibited by 1 mM Cu(2+) or Zn(2+). Its function is as follows. Catalyzes the formation of a C-F bond by combining S-adenosyl-L-methionine (SAM) and fluoride to generate 5'-fluoro-5'-deoxyadenosine (5'-FDA) and L-methionine. Probably involved in fluoroacetate (FAc) and 4-fluorothreonine (4-FT) biosynthesis. In vitro, can also catalyze the conversion of chloride and SAM to 5'-chloro-5'-deoxyadenosine (5'-CIDA) and L-methionine in the presence of L-amino acid oxidase. The sequence is that of Fluorinase from Nocardia brasiliensis (strain ATCC 700358 / HUJEG-1).